The following is a 1015-amino-acid chain: Putative ankyrin repeat protein R96 (1015 aa).

The span at 1 to 14 (MSTVKKSSKKKSSK) shows a compositional bias: basic residues. A disordered region spans residues 1 to 37 (MSTVKKSSKKKSSKKSSSGNESSKKSSPKIVPKHTAK). 8 ANK repeats span residues 136–165 (NGHK…NIDF), 168–201 (APSN…AVNI), 202–231 (DGRS…DVEV), 340–370 (LGHN…DFQA), 374–403 (NITN…KIVS), 456–485 (SGYR…TIFA), 498–527 (NNND…QFQL), and 535–564 (TVPT…ITDC).

The chain is Putative ankyrin repeat protein R96 from Acanthamoeba polyphaga mimivirus (APMV).